Consider the following 450-residue polypeptide: Tubulin alpha-3C chain (450 aa).

Residues 1 to 4 (MREC) carry the MREC motif motif. Gln-11 contacts GTP. Residue Lys-40 is modified to N6-acetyllysine. Residues Glu-71, Ser-140, Gly-144, Thr-145, Thr-179, Asn-206, and Asn-228 each coordinate GTP. Glu-71 contacts Mg(2+). Residue Glu-254 is part of the active site. 3'-nitrotyrosine is present on Tyr-282. Residue Ser-439 is modified to Phosphoserine. Residue Tyr-450 is modified to 3'-nitrotyrosine.

Belongs to the tubulin family. In terms of assembly, dimer of alpha and beta chains. A typical microtubule is a hollow water-filled tube with an outer diameter of 25 nm and an inner diameter of 15 nM. Alpha-beta heterodimers associate head-to-tail to form protofilaments running lengthwise along the microtubule wall with the beta-tubulin subunit facing the microtubule plus end conferring a structural polarity. Microtubules usually have 13 protofilaments but different protofilament numbers can be found in some organisms and specialized cells. The cofactor is Mg(2+). Some glutamate residues at the C-terminus are polyglutamylated, resulting in polyglutamate chains on the gamma-carboxyl group. Polyglutamylation plays a key role in microtubule severing by spastin (SPAST). SPAST preferentially recognizes and acts on microtubules decorated with short polyglutamate tails: severing activity by SPAST increases as the number of glutamates per tubulin rises from one to eight, but decreases beyond this glutamylation threshold. Glutamylation is also involved in cilia motility. In terms of processing, some glutamate residues at the C-terminus are monoglycylated but not polyglycylated due to the absence of functional TTLL10 in human. Monoglycylation is mainly limited to tubulin incorporated into cilia and flagella axonemes, which is required for their stability and maintenance. Flagella glycylation controls sperm motility. Both polyglutamylation and monoglycylation can coexist on the same protein on adjacent residues, and lowering glycylation levels increases polyglutamylation, and reciprocally. Post-translationally, acetylation of alpha chains at Lys-40 is located inside the microtubule lumen. This modification has been correlated with increased microtubule stability, intracellular transport and ciliary assembly. Methylation of alpha chains at Lys-40 is found in mitotic microtubules and is required for normal mitosis and cytokinesis contributing to genomic stability. In terms of processing, nitration of Tyr-450 is irreversible and interferes with normal dynein intracellular distribution. Post-translationally, undergoes a tyrosination/detyrosination cycle, the cyclic removal and re-addition of a C-terminal tyrosine residue by the enzymes tubulin tyrosine carboxypeptidase (MATCAP1/KIAA0895L, VASH1 or VASH2) and tubulin tyrosine ligase (TTL), respectively. Tyrosination promotes microtubule interaction with CAP-Gly domain-containing proteins such as CLIP1, CLIP2 and DCTN1. Tyrosination regulates the initiation of dynein-dynactin motility via interaction with DCTN1, which brings the dynein-dynactin complex into contact with microtubules. In neurons, tyrosinated tubulins mediate the initiation of retrograde vesicle transport. In terms of processing, detyrosination is involved in metaphase plate congression by guiding chromosomes during mitosis: detyrosination promotes interaction with CENPE, promoting pole-proximal transport of chromosomes toward the equator. Detyrosination increases microtubules-dependent mechanotransduction in dystrophic cardiac and skeletal muscle. In cardiomyocytes, detyrosinated microtubules are required to resist to contractile compression during contraction: detyrosination promotes association with desmin (DES) at force-generating sarcomeres, leading to buckled microtubules and mechanical resistance to contraction. As to expression, expressed in testis.

The protein resides in the cytoplasm. It localises to the cytoskeleton. The catalysed reaction is GTP + H2O = GDP + phosphate + H(+). Tubulin is the major constituent of microtubules, a cylinder consisting of laterally associated linear protofilaments composed of alpha- and beta-tubulin heterodimers. Microtubules grow by the addition of GTP-tubulin dimers to the microtubule end, where a stabilizing cap forms. Below the cap, tubulin dimers are in GDP-bound state, owing to GTPase activity of alpha-tubulin. In Homo sapiens (Human), this protein is Tubulin alpha-3C chain (TUBA3C).